A 235-amino-acid chain; its full sequence is Phosphoribosylaminoimidazole-succinocarboxamide synthase (235 aa).

This sequence belongs to the SAICAR synthetase family.

The catalysed reaction is 5-amino-1-(5-phospho-D-ribosyl)imidazole-4-carboxylate + L-aspartate + ATP = (2S)-2-[5-amino-1-(5-phospho-beta-D-ribosyl)imidazole-4-carboxamido]succinate + ADP + phosphate + 2 H(+). Its pathway is purine metabolism; IMP biosynthesis via de novo pathway; 5-amino-1-(5-phospho-D-ribosyl)imidazole-4-carboxamide from 5-amino-1-(5-phospho-D-ribosyl)imidazole-4-carboxylate: step 1/2. This is Phosphoribosylaminoimidazole-succinocarboxamide synthase from Caldanaerobacter subterraneus subsp. tengcongensis (strain DSM 15242 / JCM 11007 / NBRC 100824 / MB4) (Thermoanaerobacter tengcongensis).